We begin with the raw amino-acid sequence, 548 residues long: Chaperonin GroEL 1 (548 aa).

Residues 30 to 33, Lys-51, 87 to 91, Gly-415, 479 to 481, and Asp-495 each bind ATP; these read TLGP, DGTTT, and NAA.

This sequence belongs to the chaperonin (HSP60) family. In terms of assembly, forms a cylinder of 14 subunits composed of two heptameric rings stacked back-to-back. Interacts with the co-chaperonin GroES.

It localises to the cytoplasm. It carries out the reaction ATP + H2O + a folded polypeptide = ADP + phosphate + an unfolded polypeptide.. In terms of biological role, together with its co-chaperonin GroES, plays an essential role in assisting protein folding. The GroEL-GroES system forms a nano-cage that allows encapsulation of the non-native substrate proteins and provides a physical environment optimized to promote and accelerate protein folding. This chain is Chaperonin GroEL 1, found in Escherichia coli O1:K1 / APEC.